Consider the following 159-residue polypeptide: Probable cyclic pyranopterin monophosphate synthase accessory protein (159 aa).

The active site involves Asp128.

Belongs to the MoaC family.

Its pathway is cofactor biosynthesis; molybdopterin biosynthesis. Together with MoaA, is involved in the conversion of 5'-GTP to cyclic pyranopterin monophosphate (cPMP or molybdopterin precursor Z). This is Probable cyclic pyranopterin monophosphate synthase accessory protein from Methanothermobacter thermautotrophicus (strain ATCC 29096 / DSM 1053 / JCM 10044 / NBRC 100330 / Delta H) (Methanobacterium thermoautotrophicum).